Reading from the N-terminus, the 197-residue chain is Nucleoid occlusion factor SlmA (197 aa).

One can recognise an HTH tetR-type domain in the interval 7 to 67 (INRREHILQC…GLIEFIEESL (61 aa)). Residues 30–49 (TTAKLASEVGVSEAALYRHF) constitute a DNA-binding region (H-T-H motif).

It belongs to the nucleoid occlusion factor SlmA family. As to quaternary structure, homodimer. Interacts with FtsZ.

The protein resides in the cytoplasm. Its subcellular location is the nucleoid. Required for nucleoid occlusion (NO) phenomenon, which prevents Z-ring formation and cell division over the nucleoid. Acts as a DNA-associated cell division inhibitor that binds simultaneously chromosomal DNA and FtsZ, and disrupts the assembly of FtsZ polymers. SlmA-DNA-binding sequences (SBS) are dispersed on non-Ter regions of the chromosome, preventing FtsZ polymerization at these regions. The chain is Nucleoid occlusion factor SlmA from Shewanella sp. (strain MR-7).